Here is a 647-residue protein sequence, read N- to C-terminus: DNA mismatch repair protein MutL (647 aa).

This sequence belongs to the DNA mismatch repair MutL/HexB family.

In terms of biological role, this protein is involved in the repair of mismatches in DNA. It is required for dam-dependent methyl-directed DNA mismatch repair. May act as a 'molecular matchmaker', a protein that promotes the formation of a stable complex between two or more DNA-binding proteins in an ATP-dependent manner without itself being part of a final effector complex. In Bacillus cereus (strain ATCC 10987 / NRS 248), this protein is DNA mismatch repair protein MutL.